Consider the following 64-residue polypeptide: Enteric beta-defensin (64 aa).

A signal peptide spans 1–26 (MRLHHLLLTLLFLVLSAGSGFTQGIS). 3 disulfide bridges follow: Cys31-Cys60, Cys38-Cys53, and Cys43-Cys61.

This sequence belongs to the beta-defensin family. LAP/TAP subfamily. In terms of tissue distribution, inducibly expressed in enteric epithelial cells.

The protein localises to the secreted. In terms of biological role, has antibacterial activity. The sequence is that of Enteric beta-defensin (EBD) from Bos taurus (Bovine).